The sequence spans 142 residues: Nucleoside diphosphate kinase (142 aa).

Residues Lys-11, Phe-59, Arg-87, Thr-93, Arg-104, and Asn-114 each contribute to the ATP site. Catalysis depends on His-117, which acts as the Pros-phosphohistidine intermediate.

Belongs to the NDK family. Requires Mg(2+) as cofactor.

It localises to the cytoplasm. It carries out the reaction a 2'-deoxyribonucleoside 5'-diphosphate + ATP = a 2'-deoxyribonucleoside 5'-triphosphate + ADP. The enzyme catalyses a ribonucleoside 5'-diphosphate + ATP = a ribonucleoside 5'-triphosphate + ADP. Its function is as follows. Major role in the synthesis of nucleoside triphosphates other than ATP. The ATP gamma phosphate is transferred to the NDP beta phosphate via a ping-pong mechanism, using a phosphorylated active-site intermediate. The polypeptide is Nucleoside diphosphate kinase (Hyperthermus butylicus (strain DSM 5456 / JCM 9403 / PLM1-5)).